We begin with the raw amino-acid sequence, 126 residues long: Adenosine 5'-monophosphoramidase HINT1 (126 aa).

Ala-2 carries the N-acetylalanine modification. One can recognise an HIT domain in the interval Ile-18 to Gly-126. An N6-acetyllysine mark is found at Lys-21 and Lys-30. Asp-43–Ile-44 contacts AMP. Phosphoserine is present on residues Ser-45 and Ser-72. Residues Asn-99, Gly-105 to Ser-107, and His-112 to His-114 each bind AMP. Residues His-110–His-114 carry the Histidine triad motif motif. His-112 serves as the catalytic Tele-AMP-histidine intermediate.

The protein belongs to the HINT family. Homodimer. Interacts with CDK7. Interacts with RUVBL1 and RUVBL2 and is associated with the LEF1/TCF1-CTNNB1 complex and with a KAT5 histone acetyltransferase complex. Identified in a complex with MITF and CTNNB1. Interacts with CDC34 and RBX1, and is part of a SCF (SKP2-CUL1-F-box protein) E3 ubiquitin-protein ligase complex. Interacts with SUMO1, SUMO2 and RGS17. Interacts with the Ten-1 ICD form of TENM1. Interacts with CALM1; interaction increases in the presence of calcium ions.

The protein resides in the cytoplasm. It is found in the nucleus. The catalysed reaction is adenosine 5'-phosphoramidate + H2O = AMP + NH4(+). Exhibits adenosine 5'-monophosphoramidase activity, hydrolyzing purine nucleotide phosphoramidates with a single phosphate group such as adenosine 5'monophosphoramidate (AMP-NH2) to yield AMP and NH2. Hydrolyzes adenosine 5'monophosphomorpholidate (AMP-morpholidate) and guanosine 5'monophosphomorpholidate (GMP-morpholidate). Hydrolyzes lysyl-AMP (AMP-N-epsilon-(N-alpha-acetyl lysine methyl ester)) generated by lysine tRNA ligase, as well as Met-AMP, His-AMP and Asp-AMP, lysyl-GMP (GMP-N-epsilon-(N-alpha-acetyl lysine methyl ester)) and AMP-N-alanine methyl ester. Can also convert adenosine 5'-O-phosphorothioate and guanosine 5'-O-phosphorothioate to the corresponding nucleoside 5'-O-phosphates with concomitant release of hydrogen sulfide. In addition, functions as a scaffolding protein that modulates transcriptional activation by the LEF1/TCF1-CTNNB1 complex and by the complex formed with MITF and CTNNB1. Modulates p53/TP53 levels and p53/TP53-mediated apoptosis. Modulates proteasomal degradation of target proteins by the SCF (SKP2-CUL1-F-box protein) E3 ubiquitin-protein ligase complex. Also exhibits SUMO-specific isopeptidase activity, deconjugating SUMO1 from RANGAP1 and RGS17. The protein is Adenosine 5'-monophosphoramidase HINT1 (Hint1) of Rattus norvegicus (Rat).